Reading from the N-terminus, the 80-residue chain is Conotoxin Ca11.3 (80 aa).

The N-terminal stretch at 1–19 (MKLVLAIVVILMLLSLSTG) is a signal peptide. A propeptide spanning residues 20-42 (AEMSDNHASRSATALRDRLLSPK) is cleaved from the precursor. 4 cysteine pairs are disulfide-bonded: Cys46/Cys60, Cys53/Cys65, Cys59/Cys72, and Cys64/Cys79.

This sequence belongs to the conotoxin I3 superfamily. Expressed by the venom duct.

The protein localises to the secreted. The sequence is that of Conotoxin Ca11.3 from Conus caracteristicus (Characteristic cone).